The sequence spans 204 residues: Cold and drought-regulated protein CORA (204 aa).

18 consecutive repeat copies span residues 54 to 59 (YNHGGG), 65 to 70 (YNHGGG), 71 to 76 (YNHGGG), 78 to 83 (YHNGGG), 85 to 90 (YNHGGG), 98 to 100 (HGG), 101 to 103 (HGG), 112 to 114 (HGG), 115 to 117 (HGG), 126 to 128 (HGG), 129 to 131 (HGG), 164 to 169 (YNHGGG), 171 to 176 (YNHGGG), 178 to 180 (HGG), 181 to 183 (HGG), 184 to 186 (HGG), 187 to 189 (HGG), and 190 to 192 (HGG). The tract at residues 54–176 (YNHGGGYNGG…GGGGYNHGGG (123 aa)) is 7 X 6 AA repeats of Y-N-H-G-G-G. An 11 X 3 AA repeats of H-G-G region spans residues 98-192 (HGGHGGGGYN…GHGGHGGHGG (95 aa)). The span at 169–194 (GGYNHGGGGHGGHGGHGGHGGHGGHG) shows a compositional bias: gly residues. The interval 169–204 (GGYNHGGGGHGGHGGHGGHGGHGGHGAVQTEDNTQN) is disordered.

The protein belongs to the GRP family.

Functionally, may be involved in resistance of the plant to environmental stress. This chain is Cold and drought-regulated protein CORA (CORA), found in Medicago sativa (Alfalfa).